The sequence spans 268 residues: Ubiquinone/menaquinone biosynthesis C-methyltransferase UbiE (268 aa).

The segment at 1–23 (MTDQHAFATEQVQLDPTLSPTTE) is disordered. Residues 10–23 (EQVQLDPTLSPTTE) are compositionally biased toward polar residues. Residues T91, D112, 140 to 141 (NA), and S157 each bind S-adenosyl-L-methionine.

The protein belongs to the class I-like SAM-binding methyltransferase superfamily. MenG/UbiE family.

It catalyses the reaction a 2-demethylmenaquinol + S-adenosyl-L-methionine = a menaquinol + S-adenosyl-L-homocysteine + H(+). The catalysed reaction is a 2-methoxy-6-(all-trans-polyprenyl)benzene-1,4-diol + S-adenosyl-L-methionine = a 5-methoxy-2-methyl-3-(all-trans-polyprenyl)benzene-1,4-diol + S-adenosyl-L-homocysteine + H(+). The protein operates within quinol/quinone metabolism; menaquinone biosynthesis; menaquinol from 1,4-dihydroxy-2-naphthoate: step 2/2. It participates in cofactor biosynthesis; ubiquinone biosynthesis. Methyltransferase required for the conversion of demethylmenaquinol (DMKH2) to menaquinol (MKH2) and the conversion of 2-polyprenyl-6-methoxy-1,4-benzoquinol (DDMQH2) to 2-polyprenyl-3-methyl-6-methoxy-1,4-benzoquinol (DMQH2). In Pasteurella multocida (strain Pm70), this protein is Ubiquinone/menaquinone biosynthesis C-methyltransferase UbiE.